The chain runs to 141 residues: Hemoglobin subunit alpha (141 aa).

The region spanning 1–141 (VLSSADKNNI…VSTVLTSKYR (141 aa)) is the Globin domain. At Ser3 the chain carries Phosphoserine. 2 positions are modified to N6-succinyllysine: Lys7 and Lys11. Position 16 is an N6-acetyllysine; alternate (Lys16). Lys16 carries the N6-succinyllysine; alternate modification. Residue Tyr24 is modified to Phosphotyrosine. Ser35 is modified (phosphoserine). Lys40 is modified (N6-succinyllysine). Phosphoserine is present on Ser49. Residue His58 participates in O2 binding. His87 is a binding site for heme b. The residue at position 102 (Ser102) is a Phosphoserine. A phosphothreonine mark is found at Thr108, Thr134, and Thr137. Position 138 is a phosphoserine (Ser138).

Belongs to the globin family. Heterotetramer of two alpha chains and two beta chains. In terms of tissue distribution, red blood cells.

Its function is as follows. Involved in oxygen transport from the lung to the various peripheral tissues. Hemopressin acts as an antagonist peptide of the cannabinoid receptor CNR1. Hemopressin-binding efficiently blocks cannabinoid receptor CNR1 and subsequent signaling. The polypeptide is Hemoglobin subunit alpha (HBA) (Paguma larvata (Masked palm civet)).